Consider the following 434-residue polypeptide: Transcriptional enhancer factor TEF-3 (434 aa).

Residues Met1–Ser28 show a composition bias toward polar residues. Disordered stretches follow at residues Met1 to Val42 and Gln188 to Gln215. A DNA-binding region (TEA) is located at residues Asp36–Glu112. A compositionally biased stretch (pro residues) spans Gly201–Pro213.

Interacts with YAP1 and WWTR1/TAZ. In terms of tissue distribution, preferentially expressed in skeletal muscle. Lower levels in pancreas, placenta, and heart.

It is found in the nucleus. In terms of biological role, transcription factor which plays a key role in the Hippo signaling pathway, a pathway involved in organ size control and tumor suppression by restricting proliferation and promoting apoptosis. The core of this pathway is composed of a kinase cascade wherein MST1/MST2, in complex with its regulatory protein SAV1, phosphorylates and activates LATS1/2 in complex with its regulatory protein MOB1, which in turn phosphorylates and inactivates YAP1 oncoprotein and WWTR1/TAZ. Acts by mediating gene expression of YAP1 and WWTR1/TAZ, thereby regulating cell proliferation, migration and epithelial mesenchymal transition (EMT) induction. Binds specifically and non-cooperatively to the Sph and GT-IIC 'enhansons' (5'-GTGGAATGT-3') and activates transcription. Binds to the M-CAT motif. The polypeptide is Transcriptional enhancer factor TEF-3 (TEAD4) (Homo sapiens (Human)).